A 238-amino-acid chain; its full sequence is Ribonuclease-like storage protein (238 aa).

The first 23 residues, M1–A23, serve as a signal peptide directing secretion. Q37 provides a ligand contact to RNA. C43 and C49 are oxidised to a cystine. RNA is bound by residues H61, F109, H112–E113, and K116–H117. The Proton donor role is filled by H61. Intrachain disulfides connect C76-C120 and C196-C207. Residue E113 is part of the active site. The Proton acceptor role is filled by H117.

This sequence belongs to the RNase T2 family. Homodimer. In terms of tissue distribution, root.

In terms of biological role, may act as a storage protein providing a nitrogen source. Seems to have no RNase activity although it has conserved the active site residues. This Panax ginseng (Korean ginseng) protein is Ribonuclease-like storage protein.